A 551-amino-acid polypeptide reads, in one-letter code: L-lactate permease (551 aa).

The next 12 helical transmembrane spans lie at 13-33, 37-57, 69-89, 131-151, 159-179, 194-214, 245-265, 306-326, 366-386, 405-425, 438-458, and 530-550; these read NIWL…FALI, LKGY…ALLF, VVYG…AAVF, GAAG…GLGF, LCLI…PILV, MVGR…MAIM, IGPE…LTLF, FLFL…ALFA, FDWF…SIVW, LALP…SNYS, TGSA…FLTG, and IFTC…TWMI.

Belongs to the lactate permease family.

The protein resides in the cell inner membrane. It carries out the reaction (S)-lactate(in) + H(+)(in) = (S)-lactate(out) + H(+)(out). The catalysed reaction is (R)-lactate(in) + H(+)(in) = (R)-lactate(out) + H(+)(out). The enzyme catalyses glycolate(in) + H(+)(in) = glycolate(out) + H(+)(out). Uptake of L-lactate across the membrane. Can also transport D-lactate and glycolate. Seems to be driven by a proton motive force. This is L-lactate permease (lldP) from Salmonella typhi.